The following is a 408-amino-acid chain: DNA polymerase processivity factor (408 aa).

The Nuclear localization signal motif lies at 344-353; sequence KKRRNLLTKR.

Belongs to the herpesviridae DNA polymerase processivity factor family. Interacts with the DNA polymerase catalytic subunit. Interacts with the origin-binding protein.

The protein resides in the host nucleus. Functionally, plays an essential role in viral DNA replication by acting as the polymerase accessory subunit. Associates with the viral polymerase to increase its processivity and forms high-affinity direct interactions with DNA. Facilitates the origin-binding protein loading onto DNA thus increasing its ability to assemble into a functional complex capable of unwinding duplex DNA. The protein is DNA polymerase processivity factor of Varicella-zoster virus (strain Oka vaccine) (HHV-3).